The chain runs to 471 residues: Nitrosourea synthase (471 aa).

The HO-like stretch occupies residues 177–328; that stretch reads MWLVQFAPDF…GRMAREKIIK (152 aa). The Fe(2+) site is built by Glu-189, Glu-215, His-225, Glu-281, His-311, Asp-315, His-318, His-407, His-409, and His-448. The interval 397 to 459 is cupin; the sequence is VEPRGELSNT…ANIESDECVY (63 aa).

In terms of assembly, homodimer. The cofactor is Fe(2+).

The catalysed reaction is N(omega)-methyl-L-arginine + 2 NADH + 3 O2 + H(+) = N(delta)-hydroxy-N(omega)-methyl-N(omega)-nitroso-L-citrulline + 2 NAD(+) + 3 H2O. It carries out the reaction N(omega)-methyl-L-arginine + NADH + O2 + H(+) = N(delta)-hydroxy-N(omega)-methyl-L-arginine + NAD(+) + H2O. It catalyses the reaction N(delta)-hydroxy-N(omega)-methyl-L-arginine + NADH + O2 = N(delta),N(omega')-dihydroxy-N(omega)-methyl-L-arginine + NAD(+) + H2O. The enzyme catalyses N(delta),N(omega')-dihydroxy-N(omega)-methyl-L-arginine + O2 = N(delta)-hydroxy-N(omega)-methyl-N(omega)-nitroso-L-citrulline + H2O. The catalysed reaction is 2 N(delta)-hydroxy-N(omega)-methyl-N(omega)-nitroso-L-citrulline + AH2 = 2 N(delta)-hydroxy-N(omega)-methyl-L-citrulline + 2 nitric oxide + A. It participates in antibiotic biosynthesis. Involved in the biosynthesis of the glucosamine-nitrosourea antibiotic streptozotocin (SZN). Catalyzes a complex multi-step reaction: the overall reaction is an oxidative rearrangement of the guanidine group of N(omega)-methyl-L-arginine (L-NMA), generating an N-nitrosourea product. SznF first hydroxylates L-NMA to form N(delta)-hydroxy-N(omega)-methyl-L-arginine (L-HMA), which is further hydroxylated to give N(delta)-hydroxy-N(omega)-hydroxy-N(omega)-methyl-L-arginine (L-DHMA). Subsequently, an oxidative rearrangement converts this intermediate to N(delta)-hydroxy-N(omega)-methyl-N(omega)-nitroso-L-citrulline. This product is unstable, and degrades non-enzymically into nitric oxide and the denitrosated product N(delta)-hydroxy-N(omega)-methyl-L-citrulline. In Streptomyces achromogenes subsp. streptozoticus, this protein is Nitrosourea synthase.